A 481-amino-acid chain; its full sequence is Argininosuccinate lyase (481 aa).

It belongs to the lyase 1 family. Argininosuccinate lyase subfamily.

It localises to the cytoplasm. It catalyses the reaction 2-(N(omega)-L-arginino)succinate = fumarate + L-arginine. It functions in the pathway amino-acid biosynthesis; L-arginine biosynthesis; L-arginine from L-ornithine and carbamoyl phosphate: step 3/3. The polypeptide is Argininosuccinate lyase (Methanococcus vannielii (strain ATCC 35089 / DSM 1224 / JCM 13029 / OCM 148 / SB)).